We begin with the raw amino-acid sequence, 445 residues long: Tubulin beta chain (445 aa).

Positions 11, 69, 138, 142, 143, 144, 204, and 226 each coordinate GTP. Residue Glu69 participates in Mg(2+) binding.

This sequence belongs to the tubulin family. As to quaternary structure, dimer of alpha and beta chains. A typical microtubule is a hollow water-filled tube with an outer diameter of 25 nm and an inner diameter of 15 nM. Alpha-beta heterodimers associate head-to-tail to form protofilaments running lengthwise along the microtubule wall with the beta-tubulin subunit facing the microtubule plus end conferring a structural polarity. Microtubules usually have 13 protofilaments but different protofilament numbers can be found in some organisms and specialized cells. The cofactor is Mg(2+).

It localises to the cytoplasm. It is found in the cytoskeleton. In terms of biological role, tubulin is the major constituent of microtubules, a cylinder consisting of laterally associated linear protofilaments composed of alpha- and beta-tubulin heterodimers. Microtubules grow by the addition of GTP-tubulin dimers to the microtubule end, where a stabilizing cap forms. Below the cap, tubulin dimers are in GDP-bound state, owing to GTPase activity of alpha-tubulin. The sequence is that of Tubulin beta chain from Coprinopsis cinerea (strain Okayama-7 / 130 / ATCC MYA-4618 / FGSC 9003) (Inky cap fungus).